Here is a 310-residue protein sequence, read N- to C-terminus: Fructose-bisphosphate aldolase/6-deoxy-5-ketofructose 1-phosphate synthase (310 aa).

Substrate contacts are provided by residues 48-49 (DQ), His53, Asp57, and Trp180. Tyr182 functions as the Proton donor in the catalytic mechanism. Residues Arg184, 213–215 (KVN), 241–243 (AGG), and 270–271 (GR) contribute to the substrate site. The Schiff-base intermediate with dihydroxyacetone-P role is filled by Lys213. Catalysis depends on Lys213, which acts as the Schiff-base intermediate with substrate.

Belongs to the DeoC/FbaB aldolase family.

The catalysed reaction is beta-D-fructose 1,6-bisphosphate = D-glyceraldehyde 3-phosphate + dihydroxyacetone phosphate. It carries out the reaction beta-D-fructose 1,6-bisphosphate + methylglyoxal = 1-deoxy-D-threo-hexo-2,5-diulose 6-phosphate + D-glyceraldehyde 3-phosphate. The enzyme catalyses beta-D-fructose 1-phosphate + methylglyoxal = 1-deoxy-D-threo-hexo-2,5-diulose 6-phosphate + D-glyceraldehyde. It participates in aromatic compound metabolism. In terms of biological role, catalyzes the transaldolization of either fructose-1-P or fructose-1,6-bisphosphate with methylglyoxal to produce 6-deoxy-5-ketofructose-1-phosphate (DKFP). Also catalyzes the reversible aldol condensation of dihydroxyacetone phosphate (DHAP or glycerone-phosphate) with glyceraldehyde 3-phosphate (G3P or GAP) to produce fructose 1,6-bisphosphate (FBP). In Methanocaldococcus jannaschii (strain ATCC 43067 / DSM 2661 / JAL-1 / JCM 10045 / NBRC 100440) (Methanococcus jannaschii), this protein is Fructose-bisphosphate aldolase/6-deoxy-5-ketofructose 1-phosphate synthase.